The chain runs to 226 residues: LysM and putative peptidoglycan-binding domain-containing protein 1 (226 aa).

Phosphoserine is present on residues S23 and S33. The 45-residue stretch at 40-84 (LEHQLEPGDTLAGLALKYGVTMEQIKRTNRLYTNDSIFLKKTLYI) folds into the LysM domain. The disordered stretch occupies residues 95 to 156 (NGLDSEEEND…PSHDLSASDF (62 aa)). Residues 98–107 (DSEEENDGEE) are compositionally biased toward acidic residues. S99 carries the phosphoserine modification. A compositionally biased stretch (polar residues) spans 142 to 151 (QETSTPSHDL). 4 positions are modified to phosphoserine: S165, S180, S193, and S211. A disordered region spans residues 170–226 (AAAQKLRKGESGVPEEDTGLYPSSPRMQQRAVLGPVPLTRTSRTQTLRDQEDEIFKL). Residues 215–226 (TLRDQEDEIFKL) show a composition bias toward basic and acidic residues.

The protein is LysM and putative peptidoglycan-binding domain-containing protein 1 (Lysmd1) of Mus musculus (Mouse).